A 380-amino-acid polypeptide reads, in one-letter code: Succinyl-diaminopimelate desuccinylase (380 aa).

His-69 is a binding site for Zn(2+). Residue Asp-71 is part of the active site. Zn(2+) is bound at residue Asp-102. Glu-135 acts as the Proton acceptor in catalysis. The Zn(2+) site is built by Glu-136, Glu-164, and His-353.

This sequence belongs to the peptidase M20A family. DapE subfamily. Homodimer. Zn(2+) is required as a cofactor. Requires Co(2+) as cofactor.

It catalyses the reaction N-succinyl-(2S,6S)-2,6-diaminopimelate + H2O = (2S,6S)-2,6-diaminopimelate + succinate. It participates in amino-acid biosynthesis; L-lysine biosynthesis via DAP pathway; LL-2,6-diaminopimelate from (S)-tetrahydrodipicolinate (succinylase route): step 3/3. Catalyzes the hydrolysis of N-succinyl-L,L-diaminopimelic acid (SDAP), forming succinate and LL-2,6-diaminopimelate (DAP), an intermediate involved in the bacterial biosynthesis of lysine and meso-diaminopimelic acid, an essential component of bacterial cell walls. This chain is Succinyl-diaminopimelate desuccinylase, found in Cereibacter sphaeroides (strain ATCC 17025 / ATH 2.4.3) (Rhodobacter sphaeroides).